The primary structure comprises 238 residues: Probable transcriptional regulatory protein VS_II1504 (238 aa).

This sequence belongs to the TACO1 family.

The protein localises to the cytoplasm. The polypeptide is Probable transcriptional regulatory protein VS_II1504 (Vibrio atlanticus (strain LGP32) (Vibrio splendidus (strain Mel32))).